Reading from the N-terminus, the 346-residue chain is Probable disease resistance protein At5g45440 (346 aa).

Positions 38–116 (KQVEDRVETD…AYAPRIWVSM (79 aa)) constitute an NB-ARC domain. 85–92 (GEYGVGKT) is an ATP binding site. A disordered region spans residues 315–346 (FDDGKANQNGSKDGKTDSVDNPNSEESKTKPL).

Possible disease resistance protein. The polypeptide is Probable disease resistance protein At5g45440 (Arabidopsis thaliana (Mouse-ear cress)).